The chain runs to 162 residues: NADH-quinone oxidoreductase subunit I (162 aa).

4Fe-4S ferredoxin-type domains are found at residues 54-83 and 93-122; these read RRYE…INST and SSYE…ETNI. The [4Fe-4S] cluster site is built by Cys63, Cys66, Cys69, Cys73, Cys102, Cys105, Cys108, and Cys112.

Belongs to the complex I 23 kDa subunit family. In terms of assembly, NDH-1 is composed of 14 different subunits. Subunits NuoA, H, J, K, L, M, N constitute the membrane sector of the complex. It depends on [4Fe-4S] cluster as a cofactor.

The protein resides in the cell inner membrane. The enzyme catalyses a quinone + NADH + 5 H(+)(in) = a quinol + NAD(+) + 4 H(+)(out). Its function is as follows. NDH-1 shuttles electrons from NADH, via FMN and iron-sulfur (Fe-S) centers, to quinones in the respiratory chain. The immediate electron acceptor for the enzyme in this species is believed to be ubiquinone. Couples the redox reaction to proton translocation (for every two electrons transferred, four hydrogen ions are translocated across the cytoplasmic membrane), and thus conserves the redox energy in a proton gradient. The polypeptide is NADH-quinone oxidoreductase subunit I (Francisella philomiragia subsp. philomiragia (strain ATCC 25017 / CCUG 19701 / FSC 153 / O#319-036)).